The following is a 261-amino-acid chain: Phosphatidylglycerol--prolipoprotein diacylglyceryl transferase (261 aa).

The next 3 helical transmembrane spans lie at 20 to 40 (LAIH…VWLA), 54 to 74 (IIDF…LYYV), and 94 to 114 (GGGA…VFSY). Residue Arg-139 coordinates a 1,2-diacyl-sn-glycero-3-phospho-(1'-sn-glycerol). The next 3 membrane-spanning stretches (helical) occupy residues 175-195 (MPTF…VMVF), 205-225 (GDIF…VEGM), and 235-255 (ARVS…LFIY).

This sequence belongs to the Lgt family.

It localises to the cell membrane. It carries out the reaction L-cysteinyl-[prolipoprotein] + a 1,2-diacyl-sn-glycero-3-phospho-(1'-sn-glycerol) = an S-1,2-diacyl-sn-glyceryl-L-cysteinyl-[prolipoprotein] + sn-glycerol 1-phosphate + H(+). Its pathway is protein modification; lipoprotein biosynthesis (diacylglyceryl transfer). In terms of biological role, catalyzes the transfer of the diacylglyceryl group from phosphatidylglycerol to the sulfhydryl group of the N-terminal cysteine of a prolipoprotein, the first step in the formation of mature lipoproteins. This Lactococcus lactis subsp. lactis (strain IL1403) (Streptococcus lactis) protein is Phosphatidylglycerol--prolipoprotein diacylglyceryl transferase.